The following is a 129-amino-acid chain: Protein Wnt-6 (129 aa).

5 disulfides stabilise this stretch: Cys-3–Cys-17, Cys-5–Cys-12, Cys-75–Cys-106, Cys-91–Cys-101, and Cys-128–Cys-129. A lipid anchor (O-palmitoleoyl serine; by PORCN) is attached at Ser-9. A glycan (N-linked (GlcNAc...) asparagine) is linked at Asn-92.

It belongs to the Wnt family. In terms of processing, palmitoleoylation is required for efficient binding to frizzled receptors. Depalmitoleoylation leads to Wnt signaling pathway inhibition. At tailbud: dorsal, punctate; in adult: brain and heart.

The protein localises to the secreted. The protein resides in the extracellular space. It localises to the extracellular matrix. In terms of biological role, ligand for members of the frizzled family of seven transmembrane receptors. Probable developmental protein. May be a signaling molecule which affects the development of discrete regions of tissues. Is likely to signal over only few cell diameters. In Xenopus laevis (African clawed frog), this protein is Protein Wnt-6 (wnt6).